An 86-amino-acid polypeptide reads, in one-letter code: Putative membrane protein insertion efficiency factor (86 aa).

Positions 64–86 are disordered; the sequence is GVDPVPKKSSSKTSTTACGCGHS. The span at 70–79 shows a compositional bias: low complexity; it reads KKSSSKTSTT.

This sequence belongs to the UPF0161 family.

It is found in the cell inner membrane. Could be involved in insertion of integral membrane proteins into the membrane. The sequence is that of Putative membrane protein insertion efficiency factor from Janthinobacterium sp. (strain Marseille) (Minibacterium massiliensis).